The sequence spans 1149 residues: ATP-dependent helicase/deoxyribonuclease subunit B (1149 aa).

Positions 1-276 (MAIRYIFGRA…INLDIEERKV (276 aa)) constitute a UvrD-like helicase ATP-binding domain. 8–15 (GRAGRGKS) is a binding site for ATP. Residues 273-586 (ERKVLPKEKE…LVGSIERSKS (314 aa)) enclose the UvrD-like helicase C-terminal domain. Cysteine 786, cysteine 1105, cysteine 1108, and cysteine 1114 together coordinate [4Fe-4S] cluster.

It belongs to the helicase family. AddB/RexB type 1 subfamily. As to quaternary structure, heterodimer of AddA and AddB. Mg(2+) is required as a cofactor. It depends on [4Fe-4S] cluster as a cofactor.

In terms of biological role, the heterodimer acts as both an ATP-dependent DNA helicase and an ATP-dependent, dual-direction single-stranded exonuclease. Recognizes the chi site generating a DNA molecule suitable for the initiation of homologous recombination. The AddB subunit has 5' -&gt; 3' nuclease activity but not helicase activity. The chain is ATP-dependent helicase/deoxyribonuclease subunit B from Alkaliphilus metalliredigens (strain QYMF).